Consider the following 286-residue polypeptide: Bark agglutinin I polypeptide B (286 aa).

The N-terminal stretch at 1-31 (MASYKFKTQNSFLLLLSISFFFLLLLNKVNS) is a signal peptide. A glycan (N-linked (GlcNAc...) asparagine) is linked at N148. Mn(2+)-binding residues include E157 and D159. 3 residues coordinate Ca(2+): D159, N163, and D167. Positions 167 and 172 each coordinate Mn(2+).

This sequence belongs to the leguminous lectin family. RPbAI is composed of two polypeptides, A and B, that associate into five different tetrameric isolectins. The A4 combination is the only one devoid of agglutination activity. Isoform B4 displays maximal agglutination activity. As to expression, mostly in the axial and ray parenchymal cells of the inner bark. Fewer in the axial and ray parenchymal cells of the xylem. Strong expression in bark. The lectin accumulates in the inner bark in autumn and winter and disappears in may.

Functionally, bark lectins are storage proteins that probably maintain stocks of nitrogen during dormant period. Self-aggregatable molecules that can bind their own carbohydrate side chains. They could also play a role in the plant's defense against phytophagous invertebrates or herbivorous higher animals. The polypeptide is Bark agglutinin I polypeptide B (Robinia pseudoacacia (Black locust)).